The chain runs to 253 residues: uncharacterized protein (253 aa).

This is an uncharacterized protein from Acanthamoeba polyphaga mimivirus (APMV).